The sequence spans 630 residues: Probable potassium transport system protein Kup (630 aa).

12 consecutive transmembrane segments (helical) span residues 17–37 (LAIAAIGVVFGDIGTSPLYSL), 51–71 (PSAILGVISLLFWAIILVVGI), 105–125 (ITGLMMALGIFGACMFYGDAV), 144–164 (PQLSHLVLPITIVILIALFWI), 175–195 (LFGPIMVIWFVTIAALGVYHI), 218–238 (VLLAYVVLGSVVLVLTGAEAL), 255–275 (YVLVMPSLVLNYFGQGALLLL), 283–303 (PFFLLAPQWAALPLVVLSTVA), 344–364 (IYVPVVNWLLLFVILCIVIGF), 374–394 (YGIAVTATMVITTILAAVVMV), 402–422 (LLVAMIIGVFLVIDLGFFGAN), and 428–448 (QGGWLPLGIGALLFFLLMTWY).

The protein belongs to the HAK/KUP transporter (TC 2.A.72) family.

It is found in the cell inner membrane. The catalysed reaction is K(+)(in) + H(+)(in) = K(+)(out) + H(+)(out). Functionally, transport of potassium into the cell. Likely operates as a K(+):H(+) symporter. The polypeptide is Probable potassium transport system protein Kup (Burkholderia thailandensis (strain ATCC 700388 / DSM 13276 / CCUG 48851 / CIP 106301 / E264)).